A 489-amino-acid chain; its full sequence is Betaine aldehyde dehydrogenase (489 aa).

Positions 26 and 93 each coordinate K(+). 150–152 (GAW) is an NAD(+) binding site. The active-site Charge relay system is K162. An NAD(+)-binding site is contributed by 176–179 (KPSE). V180 is a binding site for K(+). 229-232 (GVET) serves as a coordination point for NAD(+). Position 245 (L245) interacts with K(+). E251 serves as the catalytic Proton acceptor. G253, C285, and E386 together coordinate NAD(+). The active-site Nucleophile is the C285. C285 bears the Cysteine sulfenic acid (-SOH) mark. The K(+) site is built by K456 and G459. E463 acts as the Charge relay system in catalysis.

It belongs to the aldehyde dehydrogenase family. As to quaternary structure, dimer of dimers. The cofactor is K(+).

It catalyses the reaction betaine aldehyde + NAD(+) + H2O = glycine betaine + NADH + 2 H(+). It functions in the pathway amine and polyamine biosynthesis; betaine biosynthesis via choline pathway; betaine from betaine aldehyde: step 1/1. Involved in the biosynthesis of the osmoprotectant glycine betaine. Catalyzes the irreversible oxidation of betaine aldehyde to the corresponding acid. The chain is Betaine aldehyde dehydrogenase from Burkholderia mallei (strain SAVP1).